Consider the following 292-residue polypeptide: Protoheme IX farnesyltransferase (292 aa).

Helical transmembrane passes span phenylalanine 11–isoleucine 31, tryptophan 37–leucine 57, alanine 85–leucine 105, valine 108–tryptophan 128, valine 133–valine 153, serine 163–isoleucine 183, valine 199–glycine 219, alanine 223–phenylalanine 243, and tryptophan 261–isoleucine 281.

It belongs to the UbiA prenyltransferase family. Protoheme IX farnesyltransferase subfamily.

It is found in the cell inner membrane. It carries out the reaction heme b + (2E,6E)-farnesyl diphosphate + H2O = Fe(II)-heme o + diphosphate. The protein operates within porphyrin-containing compound metabolism; heme O biosynthesis; heme O from protoheme: step 1/1. Converts heme B (protoheme IX) to heme O by substitution of the vinyl group on carbon 2 of heme B porphyrin ring with a hydroxyethyl farnesyl side group. The protein is Protoheme IX farnesyltransferase of Bdellovibrio bacteriovorus (strain ATCC 15356 / DSM 50701 / NCIMB 9529 / HD100).